Consider the following 343-residue polypeptide: 5-amino-6-(D-ribitylamino)uracil--L-tyrosine 4-hydroxyphenyl transferase (343 aa).

Residues 39 to 268 (VTYVVNRNIN…AIARILLYPE (230 aa)) form the Radical SAM core domain. 3 residues coordinate [4Fe-4S] cluster: cysteine 53, cysteine 57, and cysteine 60.

The protein belongs to the radical SAM superfamily. CofH family. As to quaternary structure, consists of two subunits, CofG and CofH. [4Fe-4S] cluster serves as cofactor.

It carries out the reaction 5-amino-6-(D-ribitylamino)uracil + L-tyrosine + S-adenosyl-L-methionine = 5-amino-5-(4-hydroxybenzyl)-6-(D-ribitylimino)-5,6-dihydrouracil + 2-iminoacetate + 5'-deoxyadenosine + L-methionine + H(+). It functions in the pathway cofactor biosynthesis; coenzyme F0 biosynthesis. In terms of biological role, catalyzes the radical-mediated synthesis of 5-amino-5-(4-hydroxybenzyl)-6-(D-ribitylimino)-5,6-dihydrouracil from 5-amino-6-(D-ribitylamino)uracil and L-tyrosine. In Archaeoglobus fulgidus (strain ATCC 49558 / DSM 4304 / JCM 9628 / NBRC 100126 / VC-16), this protein is 5-amino-6-(D-ribitylamino)uracil--L-tyrosine 4-hydroxyphenyl transferase.